The following is a 562-amino-acid chain: Formate--tetrahydrofolate ligase (562 aa).

ATP is bound at residue 71–78 (TPAGEGKS).

This sequence belongs to the formate--tetrahydrofolate ligase family.

It carries out the reaction (6S)-5,6,7,8-tetrahydrofolate + formate + ATP = (6R)-10-formyltetrahydrofolate + ADP + phosphate. It participates in one-carbon metabolism; tetrahydrofolate interconversion. The sequence is that of Formate--tetrahydrofolate ligase from Bacillus cereus (strain Q1).